Reading from the N-terminus, the 352-residue chain is UDP-N-acetylglucosamine--N-acetylmuramyl-(pentapeptide) pyrophosphoryl-undecaprenol N-acetylglucosamine transferase 2 (352 aa).

UDP-N-acetyl-alpha-D-glucosamine is bound by residues 11-13 (SAG), R164, S194, and Q289.

It belongs to the glycosyltransferase 28 family. MurG subfamily.

It localises to the cell membrane. It catalyses the reaction di-trans,octa-cis-undecaprenyl diphospho-N-acetyl-alpha-D-muramoyl-L-alanyl-D-glutamyl-meso-2,6-diaminopimeloyl-D-alanyl-D-alanine + UDP-N-acetyl-alpha-D-glucosamine = di-trans,octa-cis-undecaprenyl diphospho-[N-acetyl-alpha-D-glucosaminyl-(1-&gt;4)]-N-acetyl-alpha-D-muramoyl-L-alanyl-D-glutamyl-meso-2,6-diaminopimeloyl-D-alanyl-D-alanine + UDP + H(+). It functions in the pathway cell wall biogenesis; peptidoglycan biosynthesis. Functionally, cell wall formation. Catalyzes the transfer of a GlcNAc subunit on undecaprenyl-pyrophosphoryl-MurNAc-pentapeptide (lipid intermediate I) to form undecaprenyl-pyrophosphoryl-MurNAc-(pentapeptide)GlcNAc (lipid intermediate II). In Bacillus anthracis, this protein is UDP-N-acetylglucosamine--N-acetylmuramyl-(pentapeptide) pyrophosphoryl-undecaprenol N-acetylglucosamine transferase 2.